Reading from the N-terminus, the 581-residue chain is Arginine--tRNA ligase (581 aa).

The 'HIGH' region signature appears at 126–136 (PNLAKEMHVGH).

Belongs to the class-I aminoacyl-tRNA synthetase family. Monomer.

The protein localises to the cytoplasm. The catalysed reaction is tRNA(Arg) + L-arginine + ATP = L-arginyl-tRNA(Arg) + AMP + diphosphate. The protein is Arginine--tRNA ligase of Shewanella baltica (strain OS223).